We begin with the raw amino-acid sequence, 125 residues long: SOSS complex subunit C homolog A (125 aa).

Over residues 1-16 (MAFPNTSAQQAETNSK) the composition is skewed to polar residues. 3 disordered regions span residues 1–20 (MAFP…SLEE), 38–74 (SNTN…AAFN), and 105–125 (PATP…NNPK).

It belongs to the SOSS-C family.

This Drosophila willistoni (Fruit fly) protein is SOSS complex subunit C homolog A.